Reading from the N-terminus, the 226-residue chain is Thymidylate kinase (226 aa).

20 to 27 (GGEGAGKS) lines the ATP pocket.

It belongs to the thymidylate kinase family.

It carries out the reaction dTMP + ATP = dTDP + ADP. Functionally, phosphorylation of dTMP to form dTDP in both de novo and salvage pathways of dTTP synthesis. The protein is Thymidylate kinase of Bradyrhizobium sp. (strain BTAi1 / ATCC BAA-1182).